Here is a 31-residue protein sequence, read N- to C-terminus: Phospholipase A2 homolog P-elapitoxin-Aa1a beta chain (31 aa).

This sequence belongs to the phospholipase A2 family. Group I subfamily. As to quaternary structure, heterotrimer of alpha, beta and gamma chains, each related to PLA2. As to expression, expressed by the venom gland.

The protein localises to the secreted. Its function is as follows. Heterotrimer: Snake venom phospholipase A2 (PLA2) that has presynaptic neurotoxicity. Inhibits nerve-evoked twitch contractions but not responses to cholinergic agonists acetylcholine and carbachol and to depolarizing agonist KCl. Causes a fade in tetanic contractions. Displays a triphasic mode of action with depression, enhancement and blockade of neurotransmission. Does not display myotoxic activity such as changes in baseline muscle tension or inhibition of directly stimulated muscle twitches. All subunits are necessary for maximum toxicity. Functionally, monomer: The beta chain has no enzymatic activity and is not toxic by itself. This Acanthophis antarcticus (Common death adder) protein is Phospholipase A2 homolog P-elapitoxin-Aa1a beta chain.